Here is a 323-residue protein sequence, read N- to C-terminus: CIMIP2 protein CG18335 (323 aa).

The protein belongs to the CIMIP2 family.

It is found in the cytoplasm. The protein localises to the cytoskeleton. It localises to the cilium axoneme. Probable microtubule inner protein (MIP) part of the dynein-decorated doublet microtubules (DMTs) in cilium axoneme. This chain is CIMIP2 protein CG18335, found in Drosophila melanogaster (Fruit fly).